Consider the following 187-residue polypeptide: Elongation factor P (187 aa).

This sequence belongs to the elongation factor P family.

It localises to the cytoplasm. It participates in protein biosynthesis; polypeptide chain elongation. Its function is as follows. Involved in peptide bond synthesis. Stimulates efficient translation and peptide-bond synthesis on native or reconstituted 70S ribosomes in vitro. Probably functions indirectly by altering the affinity of the ribosome for aminoacyl-tRNA, thus increasing their reactivity as acceptors for peptidyl transferase. This Ruegeria sp. (strain TM1040) (Silicibacter sp.) protein is Elongation factor P.